A 437-amino-acid chain; its full sequence is Serine hydroxymethyltransferase 1 (437 aa).

Residues leucine 132 and 136 to 138 (GHL) each bind (6S)-5,6,7,8-tetrahydrofolate. Lysine 241 is subject to N6-(pyridoxal phosphate)lysine.

Belongs to the SHMT family. Homodimer. Pyridoxal 5'-phosphate is required as a cofactor.

It is found in the cytoplasm. The catalysed reaction is (6R)-5,10-methylene-5,6,7,8-tetrahydrofolate + glycine + H2O = (6S)-5,6,7,8-tetrahydrofolate + L-serine. It functions in the pathway one-carbon metabolism; tetrahydrofolate interconversion. The protein operates within amino-acid biosynthesis; glycine biosynthesis; glycine from L-serine: step 1/1. Catalyzes the reversible interconversion of serine and glycine with tetrahydrofolate (THF) serving as the one-carbon carrier. This reaction serves as the major source of one-carbon groups required for the biosynthesis of purines, thymidylate, methionine, and other important biomolecules. Also exhibits THF-independent aldolase activity toward beta-hydroxyamino acids, producing glycine and aldehydes, via a retro-aldol mechanism. The sequence is that of Serine hydroxymethyltransferase 1 from Mesorhizobium japonicum (strain LMG 29417 / CECT 9101 / MAFF 303099) (Mesorhizobium loti (strain MAFF 303099)).